A 398-amino-acid chain; its full sequence is MRASYLFTSESVSEGHPDKVCDRISDEIVDLFFREGPKAGIDPWAIRAACETLATTNKVVIAGETRGPASVTNEHIEHVVREAIKDIGYEQDGFHWKTADIEILLHPQSADIAQGVDALQPGTNQEEGAGDQGIMFGYATNETPDLMPAPIFYAHKILRLISEARHSGKEKVLGPDSKSQVTIQYENGKPVGVREIVVSHQHLVEDMTSNQVRERVEPYVREALPEGWITDKTIWHINPTGKFFIGGPDGDTGLTGRKIIVDTYGGAAPHGGGAFSGKDPTKVDRSAAYASRYLAKNIVAAGLADRCTLQLAYAIGVARPLSIYIDTHGTGKVTEDKLEKAVAEAMDLTPRGIRKHLDLNKPIYARTSSYGHFGRTPDAEGGFSWEKTDLAEALKRAI.

Histidine 16 is an ATP binding site. Aspartate 18 contributes to the Mg(2+) binding site. Glutamate 51 is a binding site for K(+). 2 residues coordinate L-methionine: glutamate 64 and glutamine 108. A flexible loop region spans residues 108 to 118; that stretch reads QSADIAQGVDA. Residues 176 to 178, 242 to 243, aspartate 251, 257 to 258, alanine 274, and lysine 278 each bind ATP; these read DSK, KF, and RK. Residue aspartate 251 participates in L-methionine binding. Position 282 (lysine 282) interacts with L-methionine.

This sequence belongs to the AdoMet synthase family. Homotetramer; dimer of dimers. It depends on Mg(2+) as a cofactor. The cofactor is K(+).

Its subcellular location is the cytoplasm. It carries out the reaction L-methionine + ATP + H2O = S-adenosyl-L-methionine + phosphate + diphosphate. The protein operates within amino-acid biosynthesis; S-adenosyl-L-methionine biosynthesis; S-adenosyl-L-methionine from L-methionine: step 1/1. Catalyzes the formation of S-adenosylmethionine (AdoMet) from methionine and ATP. The overall synthetic reaction is composed of two sequential steps, AdoMet formation and the subsequent tripolyphosphate hydrolysis which occurs prior to release of AdoMet from the enzyme. The chain is S-adenosylmethionine synthase 2 from Rhodopseudomonas palustris (strain BisB18).